The chain runs to 229 residues: Uracil-DNA glycosylase (229 aa).

Catalysis depends on aspartate 65, which acts as the Proton acceptor.

Belongs to the uracil-DNA glycosylase (UDG) superfamily. UNG family.

It localises to the cytoplasm. It carries out the reaction Hydrolyzes single-stranded DNA or mismatched double-stranded DNA and polynucleotides, releasing free uracil.. Functionally, excises uracil residues from the DNA which can arise as a result of misincorporation of dUMP residues by DNA polymerase or due to deamination of cytosine. The sequence is that of Uracil-DNA glycosylase from Oceanobacillus iheyensis (strain DSM 14371 / CIP 107618 / JCM 11309 / KCTC 3954 / HTE831).